Here is a 108-residue protein sequence, read N- to C-terminus: Mitochondrial import inner membrane translocase subunit tim-13 (108 aa).

A Twin CX3C motif motif is present at residues 45 to 68 (CTNKCITAPGSSLASGEKQCLQRC). 2 disulfides stabilise this stretch: C45-C68 and C49-C64. The interval 89–108 (EEMASSGGMGGGFGQGPSFS) is disordered. Gly residues predominate over residues 95 to 108 (GGMGGGFGQGPSFS).

It belongs to the small Tim family. Heterohexamer; composed of 3 copies of tim-8/ddp-1 and 3 copies of tin-13/tim-13, named soluble 70 kDa complex. Associates with the TIM22 complex, whose core is composed of tim-22.

Its subcellular location is the mitochondrion inner membrane. Mitochondrial intermembrane chaperone that participates in the import and insertion of some multi-pass transmembrane proteins into the mitochondrial inner membrane. Also required for the transfer of beta-barrel precursors from the TOM complex to the sorting and assembly machinery (SAM complex) of the outer membrane. Acts as a chaperone-like protein that protects the hydrophobic precursors from aggregation and guide them through the mitochondrial intermembrane space. The tim-8-tim-13 complex mediates the import of some proteins while the predominant tim-9/tin-9.1-tim-10/tin-10 70 kDa complex mediates the import of much more proteins. The polypeptide is Mitochondrial import inner membrane translocase subunit tim-13 (tin-13) (Caenorhabditis elegans).